A 376-amino-acid polypeptide reads, in one-letter code: Glutamate 5-kinase (376 aa).

Lys-10 contacts ATP. Ser-50, Asp-137, and Asn-149 together coordinate substrate. ATP is bound at residue 169 to 170 (TD). Residues 275–353 (RGRLVLDAGA…AEIAGVLGFM (79 aa)) form the PUA domain.

The protein belongs to the glutamate 5-kinase family.

Its subcellular location is the cytoplasm. It carries out the reaction L-glutamate + ATP = L-glutamyl 5-phosphate + ADP. It participates in amino-acid biosynthesis; L-proline biosynthesis; L-glutamate 5-semialdehyde from L-glutamate: step 1/2. Its function is as follows. Catalyzes the transfer of a phosphate group to glutamate to form L-glutamate 5-phosphate. This is Glutamate 5-kinase from Alcanivorax borkumensis (strain ATCC 700651 / DSM 11573 / NCIMB 13689 / SK2).